Consider the following 71-residue polypeptide: Stathmin-1-B (71 aa).

A coiled-coil region spans residues 1–67 (KREHEKEVLQ…EIRKGKECKE (67 aa)). The SLD domain occupies 1 to 71 (KREHEKEVLQ…GKECKEPSED (71 aa)).

Belongs to the stathmin family. In terms of assembly, binds to two alpha/beta-tubulin heterodimers. In terms of processing, from unphosphorylated forms to highly phosphorylated ones in the mature egg, followed by progressive dephosphorylation from the mid-blastula to the tailbud stage. Ubiquitous. Mostly abundant in brain and oocytes.

It localises to the cytoplasm. The protein localises to the cytoskeleton. Involved in the regulation of the microtubule (MT) filament system by destabilizing microtubules. It prevents assembly and promotes disassembly of microtubules. This chain is Stathmin-1-B (stmn1-b), found in Xenopus laevis (African clawed frog).